The following is a 542-amino-acid chain: Peptide chain release factor 3 (542 aa).

The tr-type G domain maps to glutamate 14–glycine 283. GTP-binding positions include serine 23–threonine 30, aspartate 91–histidine 95, and asparagine 145–aspartate 148.

This sequence belongs to the TRAFAC class translation factor GTPase superfamily. Classic translation factor GTPase family. PrfC subfamily.

Its subcellular location is the cytoplasm. Functionally, increases the formation of ribosomal termination complexes and stimulates activities of RF-1 and RF-2. It binds guanine nucleotides and has strong preference for UGA stop codons. It may interact directly with the ribosome. The stimulation of RF-1 and RF-2 is significantly reduced by GTP and GDP, but not by GMP. The chain is Peptide chain release factor 3 from Nostoc punctiforme (strain ATCC 29133 / PCC 73102).